Consider the following 581-residue polypeptide: Frizzled-10 (581 aa).

An N-terminal signal peptide occupies residues 1 to 20 (MQRPGPRLWLVLQVMGSCAA). At 21–225 (ISSMDMERPG…DVYWSREDKR (205 aa)) the chain is on the extracellular side. The 122-residue stretch at 29-150 (PGDGKCQPIE…NDPNYLCMEA (122 aa)) folds into the FZ domain. Cystine bridges form between Cys-34-Cys-95, Cys-42-Cys-88, Cys-79-Cys-117, Cys-106-Cys-147, and Cys-110-Cys-134. A glycan (N-linked (GlcNAc...) asparagine) is linked at Asn-48. N-linked (GlcNAc...) asparagine glycosylation is present at Asn-153. The helical transmembrane segment at 226–246 (FAVVWLAIWAVLCFFSSAFTV) threads the bilayer. Residues 247 to 262 (LTFLIDPARFRYPERP) are Cytoplasmic-facing. Residues 263–283 (IIFLSMCYCVYSVGYLIRLFA) form a helical membrane-spanning segment. The Extracellular portion of the chain corresponds to 284–311 (GAESIACDRDSGQLYVIQEGLESTGCTL). Residues 312–332 (VFLVLYYFGMASSLWWVVLTL) form a helical membrane-spanning segment. Topologically, residues 333–351 (TWFLAAGKKWGHEAIEANS) are cytoplasmic. The helical transmembrane segment at 352–372 (SYFHLAAWAIPAVKTILILVM) threads the bilayer. Over 373–393 (RRVAGDELTGVCYVGSMDVNA) the chain is Extracellular. Residues 394-414 (LTGFVLIPLACYLVIGTSFIL) form a helical membrane-spanning segment. Residues 415–443 (SGFVALFHIRRVMKTGGENTDKLEKLMVR) are Cytoplasmic-facing. Residues 444–464 (IGLFSVLYTVPATCVIACYFY) traverse the membrane as a helical segment. The Extracellular portion of the chain corresponds to 465–502 (ERLNMDYWKILAAQHKCKMNNQTKTLDCLMAASIPAVE). Asn-485 carries an N-linked (GlcNAc...) asparagine glycan. Residues 503–523 (IFMVKIFMLLVVGITSGMWIW) traverse the membrane as a helical segment. Over 524–581 (TSKTLQSWQQVCSRRLKKKSRRKPASVITSGGIYKKAQHPQKTHHGKYEIPAQSPTCV) the chain is Cytoplasmic. The Lys-Thr-X-X-X-Trp motif, mediates interaction with the PDZ domain of Dvl family members signature appears at 526 to 531 (KTLQSW). Residues 560–581 (AQHPQKTHHGKYEIPAQSPTCV) form a disordered region. Positions 579–581 (TCV) match the PDZ-binding motif.

Belongs to the G-protein coupled receptor Fz/Smo family. In terms of assembly, interacts with WNT7B. Interacts with MYOC. In terms of processing, ubiquitinated by ZNRF3, leading to its degradation by the proteasome. Highest levels in the placenta and fetal kidney, followed by fetal lung and brain. In adult brain, abundantly expressed in the cerebellum, followed by cerebral cortex, medulla and spinal cord; very low levels in total brain, frontal lobe, temporal lobe and putamen. Weak expression detected in adult brain, heart, lung, skeletal muscle, pancreas, spleen and prostate.

The protein localises to the cell membrane. Receptor for Wnt proteins. Functions in the canonical Wnt/beta-catenin signaling pathway. The canonical Wnt/beta-catenin signaling pathway leads to the activation of disheveled proteins, inhibition of GSK-3 kinase, nuclear accumulation of beta-catenin and activation of Wnt target genes. A second signaling pathway involving PKC and calcium fluxes has been seen for some family members, but it is not yet clear if it represents a distinct pathway or if it can be integrated in the canonical pathway, as PKC seems to be required for Wnt-mediated inactivation of GSK-3 kinase. Both pathways seem to involve interactions with G-proteins. May be involved in transduction and intercellular transmission of polarity information during tissue morphogenesis and/or in differentiated tissues. This is Frizzled-10 (FZD10) from Homo sapiens (Human).